A 121-amino-acid polypeptide reads, in one-letter code: Neuropeptide-like protein 7 (121 aa).

An N-terminal signal peptide occupies residues 1–22 (MYIKAALLIVVLFGVASQITSA).

Functionally, may regulate lifespan in response to food availability and oxidative stress. This Caenorhabditis elegans protein is Neuropeptide-like protein 7.